The following is a 376-amino-acid chain: Quinolinate synthase (376 aa).

Histidine 57 and serine 78 together coordinate iminosuccinate. [4Fe-4S] cluster is bound at residue cysteine 123. Iminosuccinate is bound by residues 149 to 151 (YAN) and serine 166. Cysteine 210 provides a ligand contact to [4Fe-4S] cluster. Iminosuccinate contacts are provided by residues 236-238 (HPE) and threonine 253. Residue cysteine 307 participates in [4Fe-4S] cluster binding.

It belongs to the quinolinate synthase family. Type 1 subfamily. The cofactor is [4Fe-4S] cluster.

It is found in the cytoplasm. The catalysed reaction is iminosuccinate + dihydroxyacetone phosphate = quinolinate + phosphate + 2 H2O + H(+). The protein operates within cofactor biosynthesis; NAD(+) biosynthesis; quinolinate from iminoaspartate: step 1/1. In terms of biological role, catalyzes the condensation of iminoaspartate with dihydroxyacetone phosphate to form quinolinate. This chain is Quinolinate synthase, found in Paraburkholderia phymatum (strain DSM 17167 / CIP 108236 / LMG 21445 / STM815) (Burkholderia phymatum).